Reading from the N-terminus, the 141-residue chain is Large ribosomal subunit protein uL11 (141 aa).

This sequence belongs to the universal ribosomal protein uL11 family. Part of the ribosomal stalk of the 50S ribosomal subunit. Interacts with L10 and the large rRNA to form the base of the stalk. L10 forms an elongated spine to which L12 dimers bind in a sequential fashion forming a multimeric L10(L12)X complex. One or more lysine residues are methylated.

In terms of biological role, forms part of the ribosomal stalk which helps the ribosome interact with GTP-bound translation factors. The polypeptide is Large ribosomal subunit protein uL11 (Parasynechococcus marenigrum (strain WH8102)).